A 279-amino-acid polypeptide reads, in one-letter code: DegV domain-containing protein SAR1438 (279 aa).

The DegV domain occupies 4 to 278; the sequence is QIIVTDSTSD…QGAIGLVVLK (275 aa). Hexadecanoate-binding residues include T61 and S93.

Functionally, may bind long-chain fatty acids, such as palmitate, and may play a role in lipid transport or fatty acid metabolism. This Staphylococcus aureus (strain MRSA252) protein is DegV domain-containing protein SAR1438.